We begin with the raw amino-acid sequence, 388 residues long: Succinate--CoA ligase [ADP-forming] subunit beta (388 aa).

The 236-residue stretch at 9–244 (KSLFAEYGLP…PSQDDAREAH (236 aa)) folds into the ATP-grasp domain. Residues K46, 53–55 (GRG), E99, T102, and E107 each bind ATP. Mg(2+) is bound by residues N199 and D213. Substrate-binding positions include N264 and 321–323 (GIV).

Belongs to the succinate/malate CoA ligase beta subunit family. In terms of assembly, heterotetramer of two alpha and two beta subunits. Mg(2+) is required as a cofactor.

The enzyme catalyses succinate + ATP + CoA = succinyl-CoA + ADP + phosphate. It catalyses the reaction GTP + succinate + CoA = succinyl-CoA + GDP + phosphate. The protein operates within carbohydrate metabolism; tricarboxylic acid cycle; succinate from succinyl-CoA (ligase route): step 1/1. Its function is as follows. Succinyl-CoA synthetase functions in the citric acid cycle (TCA), coupling the hydrolysis of succinyl-CoA to the synthesis of either ATP or GTP and thus represents the only step of substrate-level phosphorylation in the TCA. The beta subunit provides nucleotide specificity of the enzyme and binds the substrate succinate, while the binding sites for coenzyme A and phosphate are found in the alpha subunit. This Shewanella sp. (strain ANA-3) protein is Succinate--CoA ligase [ADP-forming] subunit beta.